Consider the following 530-residue polypeptide: Putative sulfate transporter YvdB (530 aa).

10 consecutive transmembrane segments (helical) span residues 19 to 39 (LIAGIVVGVVAIPLGMAFAIA), 41 to 61 (GVEPEYGLYTVVIAGICISLF), 68 to 88 (IGGPTGAFVPILFGIIMQYGL), 91 to 111 (LLIAGFMAGVMLVLFGLFKLG), 121 to 141 (VIVGFTAGIAVLIFTEQIANF), 164 to 184 (LGTFNVYAILTAVIGLVILLV), 192 to 212 (VPGALLALLISTVVAVVFFPD), 241 to 261 (MVMLFPAALVIALLGGLESIL), 313 to 333 (AVSPVSGVVHGVVVLLVLLVF), and 384 to 404 (VLFDLIIGVATGLLLAFVFFI). The region spanning 420 to 530 (PVLAKREDPS…FFDHHDEITG (111 aa)) is the STAS domain.

This sequence belongs to the SLC26A/SulP transporter (TC 2.A.53) family.

The protein resides in the cell membrane. This is Putative sulfate transporter YvdB (yvdB) from Bacillus subtilis (strain 168).